Reading from the N-terminus, the 365-residue chain is DNA replication and repair protein RecF (365 aa).

30-37 (GNNGMGKT) contacts ATP.

It belongs to the RecF family.

The protein localises to the cytoplasm. In terms of biological role, the RecF protein is involved in DNA metabolism; it is required for DNA replication and normal SOS inducibility. RecF binds preferentially to single-stranded, linear DNA. It also seems to bind ATP. The polypeptide is DNA replication and repair protein RecF (Parabacteroides distasonis (strain ATCC 8503 / DSM 20701 / CIP 104284 / JCM 5825 / NCTC 11152)).